The chain runs to 130 residues: D-ribose pyranase (130 aa).

His-20 acts as the Proton donor in catalysis. Substrate contacts are provided by residues Asp-28, His-97, and 119–121; that span reads YAN.

This sequence belongs to the RbsD / FucU family. RbsD subfamily. In terms of assembly, homodecamer.

The protein resides in the cytoplasm. The enzyme catalyses beta-D-ribopyranose = beta-D-ribofuranose. Its pathway is carbohydrate metabolism; D-ribose degradation; D-ribose 5-phosphate from beta-D-ribopyranose: step 1/2. Its function is as follows. Catalyzes the interconversion of beta-pyran and beta-furan forms of D-ribose. In Bacillus pumilus (strain SAFR-032), this protein is D-ribose pyranase.